A 456-amino-acid polypeptide reads, in one-letter code: Glycerol-3-phosphate acyltransferase 4 (456 aa).

A signal peptide spans 1–37 (MFLLLPFDSLIVNLLGISLTVLFTLLLVFIIVPAIFG). 2 helical membrane-spanning segments follow: residues 156 to 176 (ISLR…CFLL) and 180 to 200 (IALA…VGYL). N-linked (GlcNAc...) asparagine glycosylation occurs at Asn247. Residues 248–253 (HTSPID) carry the HXXXXD motif motif. Asn327, Asn328, and Asn362 each carry an N-linked (GlcNAc...) asparagine glycan.

It belongs to the 1-acyl-sn-glycerol-3-phosphate acyltransferase family. Ubiquitous. High levels in testis. Relatively high level of expression in skeletal muscle and heart. Relatively low level of expression in lung.

The protein localises to the endoplasmic reticulum membrane. It catalyses the reaction sn-glycerol 3-phosphate + an acyl-CoA = a 1-acyl-sn-glycero-3-phosphate + CoA. The enzyme catalyses dodecanoyl-CoA + sn-glycerol 3-phosphate = 1-dodecanoyl-sn-glycerol 3-phosphate + CoA. The catalysed reaction is sn-glycerol 3-phosphate + hexadecanoyl-CoA = 1-hexadecanoyl-sn-glycero-3-phosphate + CoA. It carries out the reaction sn-glycerol 3-phosphate + octadecanoyl-CoA = 1-octadecanoyl-sn-glycero-3-phosphate + CoA. It catalyses the reaction sn-glycerol 3-phosphate + (9Z)-octadecenoyl-CoA = 1-(9Z-octadecenoyl)-sn-glycero-3-phosphate + CoA. The enzyme catalyses (9Z,12Z)-octadecadienoyl-CoA + sn-glycerol 3-phosphate = 1-(9Z,12Z)-octadecadienoyl-sn-glycero-3-phosphate + CoA. The protein operates within phospholipid metabolism; CDP-diacylglycerol biosynthesis; CDP-diacylglycerol from sn-glycerol 3-phosphate: step 1/3. Its activity is regulated as follows. Inhibited by N-ethylmaleimide (NEM). In terms of biological role, converts glycerol-3-phosphate to 1-acyl-sn-glycerol-3-phosphate (lysophosphatidic acid or LPA) by incorporating an acyl moiety at the sn-1 position of the glycerol backbone. Active against both saturated and unsaturated long-chain fatty acyl-CoAs. Protects cells against lipotoxicity. In Homo sapiens (Human), this protein is Glycerol-3-phosphate acyltransferase 4.